Here is a 220-residue protein sequence, read N- to C-terminus: Octanoyltransferase (220 aa).

Residues 31–211 form the BPL/LPL catalytic domain; the sequence is GTAADHLLLL…HFARIFDFEM (181 aa). Substrate is bound by residues 76 to 83, 143 to 145, and 156 to 158; these read RGGDVTYH, AIG, and GFA. The active-site Acyl-thioester intermediate is C174.

It belongs to the LipB family.

It localises to the cytoplasm. It carries out the reaction octanoyl-[ACP] + L-lysyl-[protein] = N(6)-octanoyl-L-lysyl-[protein] + holo-[ACP] + H(+). It participates in protein modification; protein lipoylation via endogenous pathway; protein N(6)-(lipoyl)lysine from octanoyl-[acyl-carrier-protein]: step 1/2. Its function is as follows. Catalyzes the transfer of endogenously produced octanoic acid from octanoyl-acyl-carrier-protein onto the lipoyl domains of lipoate-dependent enzymes. Lipoyl-ACP can also act as a substrate although octanoyl-ACP is likely to be the physiological substrate. This is Octanoyltransferase from Solibacter usitatus (strain Ellin6076).